We begin with the raw amino-acid sequence, 263 residues long: Lens fiber major intrinsic protein (263 aa).

Residues 1 to 9 (MWELRSASF) lie on the Cytoplasmic side of the membrane. Residues 10 to 29 (WRAIFAEFFATLFYVFFGLG) form a helical membrane-spanning segment. Residues 30 to 41 (ASLRWAPGPLHV) lie on the Extracellular side of the membrane. Residues 42-59 (LQVALAFGLALATLVQAV) traverse the membrane as a helical segment. The Cytoplasmic portion of the chain corresponds to 60 to 61 (GH). An intramembrane region (discontinuously helical) is located at residues 62–77 (ISGAHVNPAVTFAFLV). The NPA 1 motif lies at 68–70 (NPA). The Cytoplasmic segment spans residues 78–82 (GSQMS). Residues 83 to 106 (LLRAICYMAAQLLGAVAGAAVLYS) form a helical membrane-spanning segment. Residues 107-127 (VTPAAVRGNLALNTLHPGVSL) are Extracellular-facing. Residues 128–148 (GQATTVEIFLTLQFVLCIFAT) form a helical membrane-spanning segment. Topologically, residues 149–156 (YDERRNGR) are cytoplasmic. A helical membrane pass occupies residues 157 to 175 (LGSVALAVGFSLTLGHLFG). The Extracellular segment spans residues 176 to 178 (MYY). The discontinuously helical intramembrane region spans 179-193 (TGAGMNPARSFAPAI). The NPA 2 motif lies at 184–186 (NPA). Residues 194-200 (LTRNFTN) are Extracellular-facing. A helical transmembrane segment spans residues 201 to 222 (HWVYWVGPIIGGGLASLLYDFL). Topologically, residues 223–263 (LFPRLKSVSERLSILKGARPSDSNGQPEGTGEPVELKTQAL) are cytoplasmic. The interaction with CALM stretch occupies residues 227–237 (LKSVSERLSIL). Residues Ser235, Ser243, and Ser245 each carry the phosphoserine modification. The segment at 240 to 263 (ARPSDSNGQPEGTGEPVELKTQAL) is disordered. Asn246 is subject to Deamidated asparagine.

It belongs to the MIP/aquaporin (TC 1.A.8) family. In terms of assembly, homotetramer; each monomer provides an independent water pore. Two homotetramers on opposing membranes can dimerize, forming a cell-cell junction. Interacts with CALM; the calcium-calmodulin/CALM complex interacts with the cytoplasmic domains of two aquaporins, leading to channel closure. Interacts with BFSP1 (via C-terminus); prevents calcium-dependent inhibition of the water channel activity. Post-translationally, subject to partial proteolytic cleavage in the eye lens core. Partial proteolysis promotes interactions between tetramers from adjoining membranes. Fatty acylated at Met-1 and Lys-238. The acyl modifications, in decreasing order of ion abundance, are: oleoyl (C18:1) &gt; palmitoyl (C16:0) &gt; stearoyl (C18:0) &gt; eicosenoyl (C20:1) &gt; dihomo-gamma-linolenoyl (C20:3) &gt; palmitoleoyl (C16:1) &gt; eicosadienoyl (C20:2).

It localises to the cell membrane. Its subcellular location is the cell junction. It catalyses the reaction H2O(in) = H2O(out). With respect to regulation, the water channel activity is inhibited by calcium through calmodulin/CALM. Functionally, aquaporins form homotetrameric transmembrane channels, with each monomer independently mediating water transport across the plasma membrane along its osmotic gradient. Specifically expressed in lens fiber cells, this aquaporin is crucial for maintaining lens water homeostasis and transparency. Beyond water permeability, it also acts as a cell-to-cell adhesion molecule, forming thin junctions between lens fiber cells that are essential for maintaining the ordered structure and transparency of the lens. The polypeptide is Lens fiber major intrinsic protein (Oryctolagus cuniculus (Rabbit)).